The chain runs to 247 residues: Protein AC124 (247 aa).

The protein localises to the host cytoplasm. Its subcellular location is the host nucleus. Its function is as follows. Accelerates mortality in insect larvae. This is Protein AC124 from Lepidoptera (butterflies and moths).